The sequence spans 227 residues: uncharacterized protein (227 aa).

An N-terminal signal peptide occupies residues Met1–Ala23. One can recognise a VWFA domain in the interval Asn36 to Lys227.

This sequence to B.subtilis YwmD.

This is an uncharacterized protein from Bacillus subtilis (strain 168).